Here is a 626-residue protein sequence, read N- to C-terminus: (+)-3-carene synthase 2, chloroplastic (626 aa).

The transit peptide at 1–45 (MSLISAVPLASSCVSKSLISSVREHTALRRAIATLQMSRRGKSVA) directs the protein to the chloroplast. The Mg(2+) site is built by D377, D381, and D529. Residues 377–381 (DDMYD) carry the DDXXD motif motif.

Belongs to the terpene synthase family. Tpsd subfamily. It depends on Mg(2+) as a cofactor. The cofactor is Mn(2+).

The protein resides in the plastid. The protein localises to the chloroplast. The catalysed reaction is (2E)-geranyl diphosphate = (+)-car-3-ene + diphosphate. The protein operates within terpene metabolism; oleoresin biosynthesis. It functions in the pathway secondary metabolite biosynthesis; terpenoid biosynthesis. Functionally, monoterpene synthase (TPS) involved in the biosynthesis of monoterpene natural products included in conifer oleoresin secretions and volatile emissions; these compounds contribute to biotic and abiotic stress defense against herbivores and pathogens. Catalyzes the conversion of (2E)-geranyl diphosphate (GPP) to (+)-3-carene. This Pinus banksiana (Jack pine) protein is (+)-3-carene synthase 2, chloroplastic.